A 485-amino-acid chain; its full sequence is Glutamyl-tRNA(Gln) amidotransferase subunit A (485 aa).

Residues Lys80 and Ser155 each act as charge relay system in the active site. Ser179 functions as the Acyl-ester intermediate in the catalytic mechanism.

It belongs to the amidase family. GatA subfamily. In terms of assembly, heterotrimer of A, B and C subunits.

The enzyme catalyses L-glutamyl-tRNA(Gln) + L-glutamine + ATP + H2O = L-glutaminyl-tRNA(Gln) + L-glutamate + ADP + phosphate + H(+). Its function is as follows. Allows the formation of correctly charged Gln-tRNA(Gln) through the transamidation of misacylated Glu-tRNA(Gln) in organisms which lack glutaminyl-tRNA synthetase. The reaction takes place in the presence of glutamine and ATP through an activated gamma-phospho-Glu-tRNA(Gln). The protein is Glutamyl-tRNA(Gln) amidotransferase subunit A of Leptospira borgpetersenii serovar Hardjo-bovis (strain L550).